We begin with the raw amino-acid sequence, 220 residues long: Ribosomal RNA small subunit methyltransferase G 1 (220 aa).

Positions 79, 84, and 150 each coordinate S-adenosyl-L-methionine.

Belongs to the methyltransferase superfamily. RNA methyltransferase RsmG family.

Its subcellular location is the cytoplasm. The catalysed reaction is guanosine(527) in 16S rRNA + S-adenosyl-L-methionine = N(7)-methylguanosine(527) in 16S rRNA + S-adenosyl-L-homocysteine. Functionally, specifically methylates the N7 position of guanine in position 527 of 16S rRNA. The protein is Ribosomal RNA small subunit methyltransferase G 1 of Syntrophobacter fumaroxidans (strain DSM 10017 / MPOB).